The primary structure comprises 355 residues: S-adenosylmethionine:tRNA ribosyltransferase-isomerase (355 aa).

This sequence belongs to the QueA family. As to quaternary structure, monomer.

It is found in the cytoplasm. The enzyme catalyses 7-aminomethyl-7-carbaguanosine(34) in tRNA + S-adenosyl-L-methionine = epoxyqueuosine(34) in tRNA + adenine + L-methionine + 2 H(+). Its pathway is tRNA modification; tRNA-queuosine biosynthesis. In terms of biological role, transfers and isomerizes the ribose moiety from AdoMet to the 7-aminomethyl group of 7-deazaguanine (preQ1-tRNA) to give epoxyqueuosine (oQ-tRNA). This is S-adenosylmethionine:tRNA ribosyltransferase-isomerase from Aeromonas hydrophila subsp. hydrophila (strain ATCC 7966 / DSM 30187 / BCRC 13018 / CCUG 14551 / JCM 1027 / KCTC 2358 / NCIMB 9240 / NCTC 8049).